A 687-amino-acid chain; its full sequence is Adhesion G-protein coupled receptor G1 (687 aa).

The N-terminal stretch at 1-25 (MTAQSLLQMTLFLLSLLFLVQGAHG) is a signal peptide. Residue 26–33 (RGHREDFR) participates in heparin binding. Topologically, residues 26–402 (RGHREDFRFC…VEVDAVHKHY (377 aa)) are extracellular. 2 cysteine pairs are disulfide-bonded: Cys-35–Cys-91 and Cys-121–Cys-177. N-linked (GlcNAc...) asparagine glycosylation is found at Asn-39, Asn-148, and Asn-171. 190–200 (LKHPQKASRRP) contributes to the heparin binding site. One can recognise a GAIN-B domain in the interval 224–395 (DTVSFEEDRI…AVLMVSSVEV (172 aa)). Asn-234, Asn-303, Asn-324, and Asn-341 each carry an N-linked (GlcNAc...) asparagine glycan. 2 disulfide bridges follow: Cys-346/Cys-377 and Cys-366/Cys-379. A GPS region spans residues 346-395 (CVFWVEDPTLSSPGHWSSAGCETVRRETQTSCFCNHLTYFAVLMVSSVEV). The interval 384–397 (YFAVLMVSSVEVDA) is stachel. A helical membrane pass occupies residues 403 to 423 (LSLLSYVGCVISALACVVTIA). Residues 424–442 (AYLCSRRKPRDYTIKVHMN) lie on the Cytoplasmic side of the membrane. A helical membrane pass occupies residues 443–463 (LLLAVFLLDMSFLLSEPVALT). Residues 464–470 (GSEAGCR) are Extracellular-facing. A helical membrane pass occupies residues 471 to 491 (AGAIFLHFSLLACLSWMGLEG). Over 492-512 (YNLYRLVVEVFGTYVPGYLLK) the chain is Cytoplasmic. A helical membrane pass occupies residues 513–533 (LSAMGWGFPIFLVTLVALVDV). Topologically, residues 534–570 (DNYGPIILAVHRTPESVIYPSMCWIRDSLVSYVTNLG) are extracellular. Residues 571–591 (LFSLVFLFNMAMLGTMVVQIL) traverse the membrane as a helical segment. The Cytoplasmic portion of the chain corresponds to 592–603 (RLRPHTQKWSHV). Residues 604–624 (LTLLGLSLVLGLPWALIFFSF) form a helical membrane-spanning segment. Residues 625–630 (ASGTFQ) lie on the Extracellular side of the membrane. The chain crosses the membrane as a helical span at residues 631–651 (LVVLYLFSIITSFQGFLIFIW). The Cytoplasmic portion of the chain corresponds to 652–687 (YWSMRLQARGGPSPLKSNSDSARLPISSGSTSSSRI). Residues 664–687 (SPLKSNSDSARLPISSGSTSSSRI) form a disordered region. A compositionally biased stretch (low complexity) spans 678 to 687 (SSGSTSSSRI).

Belongs to the G-protein coupled receptor 2 family. LN-TM7 subfamily. As to quaternary structure, heterodimer of 2 chains generated by proteolytic processing; the large extracellular N-terminal fragment (ADGRG1 NT) and the membrane-bound C-terminal fragment (ADGRG1-CT) predominantly remain associated and non-covalently linked. ADGRG1 NT self-associates in a trans-trans manner; the homophilic interaction enhances receptor signaling. Interacts with TGM2. Interacts with heparin; leading to the reduction of ADGRG1 shedding. Interacts with COL3A1. Part of a GPCR-tetraspanin complex at least consisting of ADGRG1, CD81, eventually CD9, and GNA11 in which CD81 is enhancing the association of ADGRG1 with GNA11. Post-translationally, autoproteolytically cleaved into 2 fragments; the large extracellular N-terminal fragment (ADGRG1 NT) and the membrane-bound C-terminal fragment (ADGRG1 CT) predominantly remain associated and non-covalently linked. Shedding to yield the secreted ADGRG1 N-terminal fragment seems to involve metalloprotease(s). In terms of processing, ubiquitinated. Undergoes polyubiquitination upon activation.

The protein localises to the cell membrane. It localises to the secreted. It is found in the membrane raft. With respect to regulation, forms a heterodimer of 2 chains generated by proteolytic processing that remain associated through non-covalent interactions mediated by the GAIN-B domain. In the inactivated receptor, the Stachel sequence (also named stalk) is embedded in the GAIN-B domain, where it adopts a beta-strand conformation. On activation, the Stachel moves into the 7 transmembrane region and adopts a twisted hook-shaped configuration that forms contacts within the receptor, leading to coupling of a G-alpha protein, which activates signaling. The cleaved GAIN-B and N-terminal domains can then dissociate from the rest of the receptor. Adhesion G-protein coupled receptor (aGPCR) for steroid hormone 17alpha-hydroxypregnenolone (17-OH), which is involved in cell adhesion and cell-cell interactions. Ligand binding causes a conformation change that triggers signaling via guanine nucleotide-binding proteins (G proteins) and modulates the activity of downstream effectors, such as RhoA pathway. ADGRG1 is coupled to G(12) and/or G(13) G proteins (GNA12 and GNA13, respectively) and mediates the activation Rho small GTPases. Acts as a potent suppressor of ferroptosis: binding to 17-OH-binding initiates signaling that down-regulates CD36 and alleviates ferroptosis-induced liver injury. Ligand-binding also induces cell adhesion activity via association with proteins such as collagen III/COL3A1 and TGM2. Mediates cell matrix adhesion in developing neurons and hematopoietic stem cells. Involved in cortical development, specifically in maintenance of the pial basement membrane integrity and in cortical lamination: association with COL3A1 in the developing brain inhibits neuronal migration via activation of the RhoA pathway. Together with TGM2, acts as a regulator of myelination and myelin repair in oligodendrocyte precursor cells. Acts as a hemostatic sensor of shear force: G protein-coupled receptor signaling is activated in response to shear force in platelets, promoting G(13) G protein signaling, and platelet shape change and aggregation in a COL3A1-dependent manner. Acts as an inhibitor of VEGFA production thereby inhibiting angiogenesis through a signaling pathway mediated by PRKCA. Plays a role in the maintenance of hematopoietic stem cells in bone marrow niche. Plays an essential role in testis development. This Pongo pygmaeus (Bornean orangutan) protein is Adhesion G-protein coupled receptor G1 (ADGRG1).